The following is a 105-amino-acid chain: Nucleoid-associated protein Lm4b_02677 (105 aa).

A compositionally biased stretch (low complexity) spans 1-16 (MRGMGNMQGMMKQMQK). Residues 1 to 23 (MRGMGNMQGMMKQMQKMQKEMAK) form a disordered region.

It belongs to the YbaB/EbfC family. Homodimer.

The protein localises to the cytoplasm. It localises to the nucleoid. Binds to DNA and alters its conformation. May be involved in regulation of gene expression, nucleoid organization and DNA protection. This is Nucleoid-associated protein Lm4b_02677 from Listeria monocytogenes serotype 4b (strain CLIP80459).